The sequence spans 314 residues: Ribonucleoside-diphosphate reductase small subunit (314 aa).

Fe cation-binding residues include D73, E103, and H106. Y110 is an active-site residue. Residues 160 to 180 (VLMILIEGIFFSSSFAAIAYL) form a helical membrane-spanning segment. 3 residues coordinate Fe cation: E166, E200, and H203.

This sequence belongs to the ribonucleoside diphosphate reductase small chain family. As to quaternary structure, heterotetramer composed of a homodimer of the large subunit (R1) and a homodimer of the small subunit (R2). Larger multisubunit protein complex are also active, composed of (R1)n(R2)n. The cofactor is Fe cation.

It is found in the host membrane. It catalyses the reaction a 2'-deoxyribonucleoside 5'-diphosphate + [thioredoxin]-disulfide + H2O = a ribonucleoside 5'-diphosphate + [thioredoxin]-dithiol. Ribonucleoside-diphosphate reductase holoenzyme provides the precursors necessary for viral DNA synthesis. Allows virus growth in non-dividing cells, as well as reactivation from latency in infected hosts. Catalyzes the biosynthesis of deoxyribonucleotides from the corresponding ribonucleotides. This chain is Ribonucleoside-diphosphate reductase small subunit, found in Bovine herpesvirus 1.1 (strain Cooper) (BoHV-1).